Consider the following 275-residue polypeptide: 4,5-DOPA dioxygenase extradiol 1 (275 aa).

Zn(2+)-binding residues include His22, His60, His182, and His236.

Belongs to the DODA-type extradiol aromatic ring-opening dioxygenase family. Requires Zn(2+) as cofactor.

The enzyme catalyses L-dopa + O2 = 4-(L-alanin-3-yl)-2-hydroxy-cis,cis-muconate 6-semialdehyde + H(+). The protein operates within pigment biosynthesis; betalain biosynthesis. Its function is as follows. Opens the cyclic ring of dihydroxy-phenylalanine (DOPA) between carbons 4 and 5, thus producing an unstable seco-DOPA that rearranges nonenzymatically to betalamic acid. The protein is 4,5-DOPA dioxygenase extradiol 1 of Beta vulgaris (Sugar beet).